The following is a 198-amino-acid chain: MLPAAARPLWGPCLGLRAAAFRLARRQVPCVCAVRHMRSSGHQRCEALAGAPLDNAPKEYPPKIQQLVQDIASLTLLEISDLNELLKKTLKIQDVGLVPMGGVMSGAVPAAAAQEAVEEDIPIAKERTHFTVRLTEAKPVDKVKLIKEIKNYIQGINLVQAKKLVESLPQEIKANVAKAEAEKIKAALEAVGGTVVLE.

The N-terminal 36 residues, 1–36, are a transit peptide targeting the mitochondrion; the sequence is MLPAAARPLWGPCLGLRAAAFRLARRQVPCVCAVRH. Residues K125, K138, K142, and K144 each carry the N6-acetyllysine modification. K150 carries the post-translational modification N6-acetyllysine; alternate. Residue K150 is modified to N6-succinyllysine; alternate. A Glycyl lysine isopeptide (Lys-Gly) (interchain with G-Cter in ubiquitin) cross-link involves residue K150. At K162 the chain carries N6-succinyllysine. Residues K163 and K173 each carry the N6-acetyllysine modification. K178 bears the N6-acetyllysine; alternate mark. K178 carries the post-translational modification N6-succinyllysine; alternate. The residue at position 185 (K185) is an N6-acetyllysine.

This sequence belongs to the bacterial ribosomal protein bL12 family. Component of the mitochondrial large ribosomal subunit (mt-LSU). Mature mammalian 55S mitochondrial ribosomes consist of a small (28S) and a large (39S) subunit. The 28S small subunit contains a 12S ribosomal RNA (12S mt-rRNA) and 30 different proteins. The 39S large subunit contains a 16S rRNA (16S mt-rRNA), a copy of mitochondrial valine transfer RNA (mt-tRNA(Val)), which plays an integral structural role, and 52 different proteins. bL12m interacts with NOA1. Post-translationally, two mature forms are produced by differential two-step proteolytic cleavage. Cleaved by the mitochondrial processing protease to produce the long mature form and subsequently by the mitochondrial intermediate protease to produce the short mature form. In terms of processing, in the presence of CUL3, undergoes 'Lys-63'-linked ubiquitination at Lys-150 which results in proteasomal degradation.

The protein resides in the mitochondrion matrix. As a component of the mitochondrial large ribosomal subunit, plays a role in mitochondrial translation. When present in mitochondria as a free protein not associated with the ribosome, associates with mitochondrial RNA polymerase POLRMT to activate transcription. Required for POLRMT stability. The protein is Large ribosomal subunit protein bL12m (MRPL12) of Homo sapiens (Human).